Consider the following 228-residue polypeptide: Cytidylate kinase (228 aa).

ATP is bound at residue 12–20; sequence GPSGSGKGT.

The protein belongs to the cytidylate kinase family. Type 1 subfamily.

The protein resides in the cytoplasm. The enzyme catalyses CMP + ATP = CDP + ADP. It catalyses the reaction dCMP + ATP = dCDP + ADP. The sequence is that of Cytidylate kinase from Pseudomonas entomophila (strain L48).